The sequence spans 157 residues: Endoribonuclease YbeY (157 aa).

Residues His-114, His-118, and His-124 each contribute to the Zn(2+) site.

This sequence belongs to the endoribonuclease YbeY family. The cofactor is Zn(2+).

The protein resides in the cytoplasm. Its function is as follows. Single strand-specific metallo-endoribonuclease involved in late-stage 70S ribosome quality control and in maturation of the 3' terminus of the 16S rRNA. The protein is Endoribonuclease YbeY of Klebsiella pneumoniae (strain 342).